A 468-amino-acid chain; its full sequence is 3-isopropylmalate dehydratase large subunit (468 aa).

A disordered region spans residues 53–74 (QPSKTVATMDHNVPTDSRDLAG). Positions 347, 407, and 410 each coordinate [4Fe-4S] cluster.

This sequence belongs to the aconitase/IPM isomerase family. LeuC type 1 subfamily. As to quaternary structure, heterodimer of LeuC and LeuD. Requires [4Fe-4S] cluster as cofactor.

The enzyme catalyses (2R,3S)-3-isopropylmalate = (2S)-2-isopropylmalate. Its pathway is amino-acid biosynthesis; L-leucine biosynthesis; L-leucine from 3-methyl-2-oxobutanoate: step 2/4. In terms of biological role, catalyzes the isomerization between 2-isopropylmalate and 3-isopropylmalate, via the formation of 2-isopropylmaleate. In Pasteurella multocida (strain Pm70), this protein is 3-isopropylmalate dehydratase large subunit.